We begin with the raw amino-acid sequence, 229 residues long: Ribosomal RNA large subunit methyltransferase E (229 aa).

Residues 1 to 20 are disordered; sequence MSRAGNGGRQRIKTAKGRSA. 5 residues coordinate S-adenosyl-L-methionine: Gly75, Trp77, Asp94, Asp110, and Asp134. Lys174 serves as the catalytic Proton acceptor.

This sequence belongs to the class I-like SAM-binding methyltransferase superfamily. RNA methyltransferase RlmE family.

Its subcellular location is the cytoplasm. The catalysed reaction is uridine(2552) in 23S rRNA + S-adenosyl-L-methionine = 2'-O-methyluridine(2552) in 23S rRNA + S-adenosyl-L-homocysteine + H(+). Specifically methylates the uridine in position 2552 of 23S rRNA at the 2'-O position of the ribose in the fully assembled 50S ribosomal subunit. The protein is Ribosomal RNA large subunit methyltransferase E of Rhizorhabdus wittichii (strain DSM 6014 / CCUG 31198 / JCM 15750 / NBRC 105917 / EY 4224 / RW1) (Sphingomonas wittichii).